The sequence spans 130 residues: Small ribosomal subunit protein uS9 (130 aa).

This sequence belongs to the universal ribosomal protein uS9 family.

The sequence is that of Small ribosomal subunit protein uS9 from Phytoplasma australiense.